Reading from the N-terminus, the 167-residue chain is Protein DLS1 (167 aa).

S17 is subject to Phosphoserine.

As to quaternary structure, component of the ISW2 complex, which at least consists of ISW2, ITC1, DLS1 and DPB4.

The protein resides in the nucleus. Functions as a component of the ISW2 complex, which acts in remodeling the chromatin by catalyzing an ATP-dependent alteration in the structure of nucleosomal DNA. The ISW2 complex is involved in coordinating transcriptional repression and in inheritance of telomeric silencing. It is involved in repression of MAT a-specific genes, INO1, and early meiotic genes during mitotic growth dependent upon transcription factor UME6 and in a parallel pathway to the RPD3-SIN3 histone deacetylase complex. DLS1 is partially required for the ISW2 complex chromatin remodeling activity and is not required for its interaction with chromatin. The sequence is that of Protein DLS1 (DLS1) from Saccharomyces cerevisiae (strain ATCC 204508 / S288c) (Baker's yeast).